The sequence spans 256 residues: Late embryogenesis abundant protein 32 (256 aa).

The span at 1–14 (MSQEQPRRPREPVK) shows a compositional bias: basic and acidic residues. The disordered stretch occupies residues 1-20 (MSQEQPRRPREPVKYGDVFE). Positions 5-9 (QPRRP) match the Nuclear localization signal (NLS) motif. SMP domains follow at residues 13–66 (VKYG…TTNI), 130–187 (ITIG…HNAT), and 195–253 (IKLR…LNER).

The protein belongs to the LEA type SMP family. Embryo specific, only in dry mature seeds. Expressed at low levels.

Its subcellular location is the cytoplasm. It is found in the nucleus. LEA proteins are late embryonic proteins abundant in higher plant seed embryos. The function of those proteins is not known. The sequence is that of Late embryogenesis abundant protein 32 from Arabidopsis thaliana (Mouse-ear cress).